Here is a 293-residue protein sequence, read N- to C-terminus: Deubiquitinase OTUD6B (293 aa).

Methionine 1 bears the N-acetylmethionine mark. The OTU domain occupies 147–284 (LEIKQIPSDG…GEHYNSVTRL (138 aa)). Positions 152–158 (IPSDGHC) are cys-loop. The active site involves aspartate 155. Cysteine 158 (nucleophile) is an active-site residue. The interval 219–229 (IVNTAAWGGQL) is variable-loop. A his-loop region spans residues 267 to 277 (YMRHAYGLGEH). Residue histidine 277 is part of the active site.

As to quaternary structure, interacts with the eukaryotic translation initiation factor 4F complex.

The catalysed reaction is Thiol-dependent hydrolysis of ester, thioester, amide, peptide and isopeptide bonds formed by the C-terminal Gly of ubiquitin (a 76-residue protein attached to proteins as an intracellular targeting signal).. Functionally, deubiquitinating enzyme that may play a role in the ubiquitin-dependent regulation of protein synthesis, downstream of mTORC1. May associate with the protein synthesis initiation complex and modify its ubiquitination to repress translation. May also repress DNA synthesis and modify different cellular targets thereby regulating cell growth and proliferation. May also play a role in proteasome assembly and function. Its function is as follows. Stimulates protein synthesis. Influences the expression of CCND1/cyclin D1 by promoting its translation and regulates MYC/c-Myc protein stability. The sequence is that of Deubiquitinase OTUD6B from Homo sapiens (Human).